The chain runs to 223 residues: Large ribosomal subunit protein bL21 (223 aa).

The protein belongs to the bacterial ribosomal protein bL21 family. In terms of assembly, part of the 50S ribosomal subunit. Contacts protein L20.

Its function is as follows. This protein binds to 23S rRNA in the presence of protein L20. This is Large ribosomal subunit protein bL21 from Mesorhizobium japonicum (strain LMG 29417 / CECT 9101 / MAFF 303099) (Mesorhizobium loti (strain MAFF 303099)).